A 532-amino-acid chain; its full sequence is Bifunctional purine biosynthesis protein PurH (532 aa).

Residues 1 to 147 form the MGS-like domain; that stretch reads MAKIKRALIS…KNYRSVTVVT (147 aa).

Belongs to the PurH family.

It catalyses the reaction (6R)-10-formyltetrahydrofolate + 5-amino-1-(5-phospho-beta-D-ribosyl)imidazole-4-carboxamide = 5-formamido-1-(5-phospho-D-ribosyl)imidazole-4-carboxamide + (6S)-5,6,7,8-tetrahydrofolate. It carries out the reaction IMP + H2O = 5-formamido-1-(5-phospho-D-ribosyl)imidazole-4-carboxamide. Its pathway is purine metabolism; IMP biosynthesis via de novo pathway; 5-formamido-1-(5-phospho-D-ribosyl)imidazole-4-carboxamide from 5-amino-1-(5-phospho-D-ribosyl)imidazole-4-carboxamide (10-formyl THF route): step 1/1. It participates in purine metabolism; IMP biosynthesis via de novo pathway; IMP from 5-formamido-1-(5-phospho-D-ribosyl)imidazole-4-carboxamide: step 1/1. The chain is Bifunctional purine biosynthesis protein PurH from Magnetococcus marinus (strain ATCC BAA-1437 / JCM 17883 / MC-1).